The primary structure comprises 90 residues: Conotoxin Rg9.1 (90 aa).

Positions 1–20 (MHLSLARSAVLILLLLFALG) are cleaved as a signal peptide. Residues 21–60 (NFVGVQPGQITRDADHGINLRSLRKQMSRSPLVKGAFCGQ) constitute a propeptide that is removed on maturation. 3 cysteine pairs are disulfide-bonded: C58–C71, C62–C73, and C67–C80.

The protein belongs to the conotoxin P superfamily. Expressed by the venom duct.

It localises to the secreted. Functionally, probable neurotoxin that inhibits ion channels. The protein is Conotoxin Rg9.1 of Conus regius (Crown cone).